We begin with the raw amino-acid sequence, 299 residues long: ATP phosphoribosyltransferase (299 aa).

The protein belongs to the ATP phosphoribosyltransferase family. Long subfamily. Mg(2+) is required as a cofactor.

The protein resides in the cytoplasm. The catalysed reaction is 1-(5-phospho-beta-D-ribosyl)-ATP + diphosphate = 5-phospho-alpha-D-ribose 1-diphosphate + ATP. It functions in the pathway amino-acid biosynthesis; L-histidine biosynthesis; L-histidine from 5-phospho-alpha-D-ribose 1-diphosphate: step 1/9. With respect to regulation, feedback inhibited by histidine. Its function is as follows. Catalyzes the condensation of ATP and 5-phosphoribose 1-diphosphate to form N'-(5'-phosphoribosyl)-ATP (PR-ATP). Has a crucial role in the pathway because the rate of histidine biosynthesis seems to be controlled primarily by regulation of HisG enzymatic activity. The polypeptide is ATP phosphoribosyltransferase (Shewanella sp. (strain MR-7)).